We begin with the raw amino-acid sequence, 61 residues long: uncharacterized protein (61 aa).

Residues Arg-10–Pro-27 form a helical membrane-spanning segment.

The protein resides in the membrane. This is an uncharacterized protein from Dictyostelium discoideum (Social amoeba).